Reading from the N-terminus, the 310-residue chain is Uracil phosphoribosyltransferase homolog (310 aa).

Disordered stretches follow at residues 1–27 (MASE…PSPE) and 62–89 (SERD…GNYD). The segment covering 16-25 (RQVNSTSSPS) has biased composition (polar residues). Serine 25 is subject to Phosphoserine. Residues arginine 134, arginine 143, and 177 to 180 (EKGN) contribute to the GTP site. 5-phospho-alpha-D-ribose 1-diphosphate is bound at residue arginine 187. Residues arginine 204 and arginine 233 each contribute to the GTP site. Residue 239–247 (YPILSTGNT) participates in 5-phospho-alpha-D-ribose 1-diphosphate binding. 300–302 (THF) serves as a coordination point for uracil.

This sequence belongs to the UPRTase family.

Its subcellular location is the cytoplasm. The protein localises to the nucleus. The protein is Uracil phosphoribosyltransferase homolog (Uprt) of Mus musculus (Mouse).